The following is a 247-amino-acid chain: Probable transcriptional regulatory protein lpl1249 (247 aa).

The protein belongs to the TACO1 family.

The protein localises to the cytoplasm. The polypeptide is Probable transcriptional regulatory protein lpl1249 (Legionella pneumophila (strain Lens)).